The following is a 232-amino-acid chain: Orotate phosphoribosyltransferase (232 aa).

5-phospho-alpha-D-ribose 1-diphosphate-binding positions include Arg107, Lys108, Lys111, His113, and 133–141 (EDLTTAGGS). Thr137 is an orotate binding site.

Belongs to the purine/pyrimidine phosphoribosyltransferase family. PyrE subfamily. In terms of assembly, homodimer. The cofactor is Mg(2+).

The enzyme catalyses orotidine 5'-phosphate + diphosphate = orotate + 5-phospho-alpha-D-ribose 1-diphosphate. It functions in the pathway pyrimidine metabolism; UMP biosynthesis via de novo pathway; UMP from orotate: step 1/2. In terms of biological role, catalyzes the transfer of a ribosyl phosphate group from 5-phosphoribose 1-diphosphate to orotate, leading to the formation of orotidine monophosphate (OMP). The chain is Orotate phosphoribosyltransferase from Sinorhizobium fredii (strain NBRC 101917 / NGR234).